We begin with the raw amino-acid sequence, 124 residues long: Replication restart protein PriB (124 aa).

Residues 12 to 112 (IDNCLILSGS…VHAEHIEFID (101 aa)) form the SSB domain.

The protein belongs to the PriB family. Homodimer. Interacts with PriA and DnaT. Component of the replication restart primosome. Primosome assembly occurs via a 'hand-off' mechanism. PriA binds to replication forks, subsequently PriB then DnaT bind; DnaT then displaces ssDNA to generate the helicase loading substrate.

In terms of biological role, involved in the restart of stalled replication forks, which reloads the replicative helicase on sites other than the origin of replication; the PriA-PriB pathway is the major replication restart pathway. During primosome assembly it facilitates complex formation between PriA and DnaT on DNA; stabilizes PriA on DNA. Stimulates the DNA unwinding activity of PriA helicase. The polypeptide is Replication restart protein PriB (Actinobacillus pleuropneumoniae serotype 5b (strain L20)).